We begin with the raw amino-acid sequence, 418 residues long: Putative ion-transport protein YfeO (418 aa).

12 consecutive transmembrane segments (helical) span residues 10–30 (LLLS…LIVV), 54–74 (DSPL…GLVI), 99–119 (ALPG…SLGP), 120–140 (EHPI…RLLP), 149–169 (ILAS…AALI), 186–206 (LFAP…FFHP), 223–243 (ILSG…AVWC), 258–278 (VLVL…GGPV), 300–320 (DYFL…ASGF), 322–342 (GGRI…LHEH), 343–363 (VPAV…VLVV), and 371–391 (LFMA…CIVM).

The protein belongs to the chloride channel (TC 2.A.49) family.

It is found in the cell membrane. This chain is Putative ion-transport protein YfeO, found in Escherichia coli O8 (strain IAI1).